Here is a 488-residue protein sequence, read N- to C-terminus: N-succinylglutamate 5-semialdehyde dehydrogenase (488 aa).

Position 221–226 (221–226 (GSSRTG)) interacts with NAD(+). Residues glutamate 244 and cysteine 278 contribute to the active site.

It belongs to the aldehyde dehydrogenase family. AstD subfamily.

It catalyses the reaction N-succinyl-L-glutamate 5-semialdehyde + NAD(+) + H2O = N-succinyl-L-glutamate + NADH + 2 H(+). Its pathway is amino-acid degradation; L-arginine degradation via AST pathway; L-glutamate and succinate from L-arginine: step 4/5. Its function is as follows. Catalyzes the NAD-dependent reduction of succinylglutamate semialdehyde into succinylglutamate. The protein is N-succinylglutamate 5-semialdehyde dehydrogenase of Pseudomonas syringae pv. syringae (strain B728a).